Here is a 207-residue protein sequence, read N- to C-terminus: FMN-dependent NADH:quinone oxidoreductase 3 (207 aa).

Residues S10 and 16-18 contribute to the FMN site; that span reads SIS.

Belongs to the azoreductase type 1 family. Homodimer. FMN serves as cofactor.

The catalysed reaction is 2 a quinone + NADH + H(+) = 2 a 1,4-benzosemiquinone + NAD(+). It catalyses the reaction N,N-dimethyl-1,4-phenylenediamine + anthranilate + 2 NAD(+) = 2-(4-dimethylaminophenyl)diazenylbenzoate + 2 NADH + 2 H(+). Quinone reductase that provides resistance to thiol-specific stress caused by electrophilic quinones. Its function is as follows. Also exhibits azoreductase activity. Catalyzes the reductive cleavage of the azo bond in aromatic azo compounds to the corresponding amines. In Burkholderia lata (strain ATCC 17760 / DSM 23089 / LMG 22485 / NCIMB 9086 / R18194 / 383), this protein is FMN-dependent NADH:quinone oxidoreductase 3.